Reading from the N-terminus, the 352-residue chain is uncharacterized protein (352 aa).

An N-terminal signal peptide occupies residues 1–21 (MNVDSRVFRFFLVFLILVVVA).

Belongs to the bacterial solute-binding protein 1 family. WtpA subfamily.

This is an uncharacterized protein from Methanosarcina acetivorans (strain ATCC 35395 / DSM 2834 / JCM 12185 / C2A).